A 360-amino-acid polypeptide reads, in one-letter code: Cytoplasmic envelopment protein 2 (360 aa).

It belongs to the herpesviridae cytoplasmic envelopment protein 2 family. As to quaternary structure, interacts with cytoplasmic envelopment protein 3 and with the capsid.

It is found in the virion tegument. The protein localises to the host cytoplasm. Its subcellular location is the host nucleus. Functionally, plays a critical role in cytoplasmic virus egress. Participates in the final step of tegumentation and envelope acquisition within the host cytoplasm by directly interacting with the capsid. Upon virion binding to target cell, a signaling cascade is triggered to disrupt the interaction with the capsid, thereby preparing capsid uncoating. The polypeptide is Cytoplasmic envelopment protein 2 (MDV028) (Gallus gallus (Chicken)).